Consider the following 131-residue polypeptide: Methylglyoxal synthase (131 aa).

The region spanning 1-131 is the MGS-like domain; the sequence is MKIALIAHDK…GDLDYRKFRK (131 aa). Substrate contacts are provided by residues His-8, Lys-12, 34 to 37, and 54 to 55; these read TGTT and SG. The Proton donor/acceptor role is filled by Asp-60. Residue His-87 participates in substrate binding.

The protein belongs to the methylglyoxal synthase family.

It catalyses the reaction dihydroxyacetone phosphate = methylglyoxal + phosphate. In terms of biological role, catalyzes the formation of methylglyoxal from dihydroxyacetone phosphate. The polypeptide is Methylglyoxal synthase (Bacillus cytotoxicus (strain DSM 22905 / CIP 110041 / 391-98 / NVH 391-98)).